The chain runs to 426 residues: MKHLTEMVRQHKAGKTNGIYAVCSAHPLVLEAAIRYASANQTPLLIEATSNQVDQFGGYTGMTPADFRGFVCQLADSLNFPQDALILGGDHLGPNRWQNLPAAQAMANADDLIKSYVAAGFKKIHLDCSMSCQDDPIPLTDDIVAERAARLAKVAEETCREHFGEADLEYVIGTEVPVPGGAHETLSELAVTTPDAARATLEAHRHAFEKQGLNAIWPRIIALVVQPGVEFDHTNVIDYQPAKAAALSQMVENYETLIFEAHSTDYQTPQSLRQLVIDHFAILKVGPALTFALREALFSLAAIEEELVPAKACSGLRQVLENVMLDRPEYWQSHYHGDGNARRLARGYSYSDRVRYYWPDSQIDDAFAHLVRNLADSPIPLPLISQYLPLQYVKVRSGELQPTPRELIINHIQDILAQYHTACEGQ.

It belongs to the GatZ/KbaZ family. KbaZ subfamily. Forms a complex with KbaY.

Its pathway is carbohydrate metabolism; D-tagatose 6-phosphate degradation; D-glyceraldehyde 3-phosphate and glycerone phosphate from D-tagatose 6-phosphate: step 2/2. Component of the tagatose-1,6-bisphosphate aldolase KbaYZ that is required for full activity and stability of the Y subunit. Could have a chaperone-like function for the proper and stable folding of KbaY. When expressed alone, KbaZ does not show any aldolase activity. The sequence is that of D-tagatose-1,6-bisphosphate aldolase subunit KbaZ from Escherichia coli O1:K1 / APEC.